The following is an 825-amino-acid chain: Penicillin-binding protein 1A (825 aa).

Topologically, residues 1-6 (MKFIKR) are cytoplasmic. The helical; Signal-anchor for type II membrane protein transmembrane segment at 7 to 27 (LLVFSLICIILGVTTIFGFYF) threads the bilayer. At 28 to 825 (YVKSDLPDVA…YSTSSGEELF (798 aa)) the chain is on the periplasmic side. The segment at 48-216 (MQVFSQDGKL…STMNPIYSVE (169 aa)) is transglycosylase. Catalysis depends on glutamate 86, which acts as the Proton donor; for transglycosylase activity. The segment at 413-752 (PRTQDGAITA…GKTALPAWVE (340 aa)) is transpeptidase. The active-site Acyl-ester intermediate; for transpeptidase activity is serine 471.

The protein in the N-terminal section; belongs to the glycosyltransferase 51 family. This sequence in the C-terminal section; belongs to the transpeptidase family.

It is found in the cell inner membrane. It catalyses the reaction [GlcNAc-(1-&gt;4)-Mur2Ac(oyl-L-Ala-gamma-D-Glu-L-Lys-D-Ala-D-Ala)](n)-di-trans,octa-cis-undecaprenyl diphosphate + beta-D-GlcNAc-(1-&gt;4)-Mur2Ac(oyl-L-Ala-gamma-D-Glu-L-Lys-D-Ala-D-Ala)-di-trans,octa-cis-undecaprenyl diphosphate = [GlcNAc-(1-&gt;4)-Mur2Ac(oyl-L-Ala-gamma-D-Glu-L-Lys-D-Ala-D-Ala)](n+1)-di-trans,octa-cis-undecaprenyl diphosphate + di-trans,octa-cis-undecaprenyl diphosphate + H(+). It carries out the reaction Preferential cleavage: (Ac)2-L-Lys-D-Ala-|-D-Ala. Also transpeptidation of peptidyl-alanyl moieties that are N-acyl substituents of D-alanine.. It functions in the pathway cell wall biogenesis; peptidoglycan biosynthesis. Its function is as follows. Cell wall formation. Synthesis of cross-linked peptidoglycan from the lipid intermediates. The enzyme has a penicillin-insensitive transglycosylase N-terminal domain (formation of linear glycan strands) and a penicillin-sensitive transpeptidase C-terminal domain (cross-linking of the peptide subunits). This chain is Penicillin-binding protein 1A (mrcA), found in Vibrio cholerae serotype O1 (strain ATCC 39315 / El Tor Inaba N16961).